We begin with the raw amino-acid sequence, 291 residues long: Nucleotide-binding protein LJ_0866 (291 aa).

ATP is bound at residue Gly-13–Thr-20. A GTP-binding site is contributed by Asp-63–Val-66.

The protein belongs to the RapZ-like family.

Functionally, displays ATPase and GTPase activities. The sequence is that of Nucleotide-binding protein LJ_0866 from Lactobacillus johnsonii (strain CNCM I-12250 / La1 / NCC 533).